Reading from the N-terminus, the 391-residue chain is Succinate--CoA ligase [ADP-forming] subunit beta (391 aa).

Positions 9 to 245 (KQIFAKYGVP…ISEEDADERE (237 aa)) constitute an ATP-grasp domain. Residues K46, 53–55 (GRG), E99, A102, and E107 each bind ATP. Positions 200 and 214 each coordinate Mg(2+). Substrate contacts are provided by residues N265 and 322 to 324 (GIV).

Belongs to the succinate/malate CoA ligase beta subunit family. Heterotetramer of two alpha and two beta subunits. Requires Mg(2+) as cofactor.

It catalyses the reaction succinate + ATP + CoA = succinyl-CoA + ADP + phosphate. The enzyme catalyses GTP + succinate + CoA = succinyl-CoA + GDP + phosphate. The protein operates within carbohydrate metabolism; tricarboxylic acid cycle; succinate from succinyl-CoA (ligase route): step 1/1. Its function is as follows. Succinyl-CoA synthetase functions in the citric acid cycle (TCA), coupling the hydrolysis of succinyl-CoA to the synthesis of either ATP or GTP and thus represents the only step of substrate-level phosphorylation in the TCA. The beta subunit provides nucleotide specificity of the enzyme and binds the substrate succinate, while the binding sites for coenzyme A and phosphate are found in the alpha subunit. This Sulfurimonas denitrificans (strain ATCC 33889 / DSM 1251) (Thiomicrospira denitrificans (strain ATCC 33889 / DSM 1251)) protein is Succinate--CoA ligase [ADP-forming] subunit beta.